A 105-amino-acid chain; its full sequence is Large ribosomal subunit protein uL24 (105 aa).

It belongs to the universal ribosomal protein uL24 family. As to quaternary structure, part of the 50S ribosomal subunit.

One of two assembly initiator proteins, it binds directly to the 5'-end of the 23S rRNA, where it nucleates assembly of the 50S subunit. Its function is as follows. One of the proteins that surrounds the polypeptide exit tunnel on the outside of the subunit. The sequence is that of Large ribosomal subunit protein uL24 from Parvibaculum lavamentivorans (strain DS-1 / DSM 13023 / NCIMB 13966).